The following is a 111-amino-acid chain: Universal stress protein B (111 aa).

2 helical membrane-spanning segments follow: residues 1–21 (MISTVSLFWALCVVCVINMAR) and 90–110 (FILTSALCGLVAIGLIGLAIW).

The protein belongs to the universal stress protein B family.

It localises to the cell inner membrane. In Erwinia tasmaniensis (strain DSM 17950 / CFBP 7177 / CIP 109463 / NCPPB 4357 / Et1/99), this protein is Universal stress protein B.